We begin with the raw amino-acid sequence, 154 residues long: Ribosomal RNA large subunit methyltransferase H (154 aa).

Gly102 contacts S-adenosyl-L-methionine.

Belongs to the RNA methyltransferase RlmH family. As to quaternary structure, homodimer.

It localises to the cytoplasm. The catalysed reaction is pseudouridine(1915) in 23S rRNA + S-adenosyl-L-methionine = N(3)-methylpseudouridine(1915) in 23S rRNA + S-adenosyl-L-homocysteine + H(+). Its function is as follows. Specifically methylates the pseudouridine at position 1915 (m3Psi1915) in 23S rRNA. In Caulobacter sp. (strain K31), this protein is Ribosomal RNA large subunit methyltransferase H.